The primary structure comprises 485 residues: Aspartyl/glutamyl-tRNA(Asn/Gln) amidotransferase subunit B (485 aa).

It belongs to the GatB/GatE family. GatB subfamily. As to quaternary structure, heterotrimer of A, B and C subunits.

It catalyses the reaction L-glutamyl-tRNA(Gln) + L-glutamine + ATP + H2O = L-glutaminyl-tRNA(Gln) + L-glutamate + ADP + phosphate + H(+). The catalysed reaction is L-aspartyl-tRNA(Asn) + L-glutamine + ATP + H2O = L-asparaginyl-tRNA(Asn) + L-glutamate + ADP + phosphate + 2 H(+). In terms of biological role, allows the formation of correctly charged Asn-tRNA(Asn) or Gln-tRNA(Gln) through the transamidation of misacylated Asp-tRNA(Asn) or Glu-tRNA(Gln) in organisms which lack either or both of asparaginyl-tRNA or glutaminyl-tRNA synthetases. The reaction takes place in the presence of glutamine and ATP through an activated phospho-Asp-tRNA(Asn) or phospho-Glu-tRNA(Gln). In Borrelia duttonii (strain Ly), this protein is Aspartyl/glutamyl-tRNA(Asn/Gln) amidotransferase subunit B.